Here is a 171-residue protein sequence, read N- to C-terminus: 3-hydroxyanthranilate 3,4-dioxygenase (171 aa).

Arg-44 is an O2 binding site. Fe cation is bound by residues His-48, Glu-54, and His-92. Glu-54 contacts substrate. Positions 96 and 106 each coordinate substrate. A divalent metal cation contacts are provided by Cys-121, Cys-126, Cys-160, and Cys-163.

Belongs to the 3-HAO family. It depends on Fe(2+) as a cofactor.

It localises to the cytoplasm. The catalysed reaction is 3-hydroxyanthranilate + O2 = (2Z,4Z)-2-amino-3-carboxymuconate 6-semialdehyde. It participates in cofactor biosynthesis; NAD(+) biosynthesis; quinolinate from L-kynurenine: step 3/3. Catalyzes the oxidative ring opening of 3-hydroxyanthranilate to 2-amino-3-carboxymuconate semialdehyde, which spontaneously cyclizes to quinolinate. The chain is 3-hydroxyanthranilate 3,4-dioxygenase from Yarrowia lipolytica (strain CLIB 122 / E 150) (Yeast).